The chain runs to 138 residues: Putative pre-16S rRNA nuclease (138 aa).

Belongs to the YqgF nuclease family.

The protein localises to the cytoplasm. Functionally, could be a nuclease involved in processing of the 5'-end of pre-16S rRNA. The sequence is that of Putative pre-16S rRNA nuclease from Enterobacter sp. (strain 638).